Here is a 426-residue protein sequence, read N- to C-terminus: Glutamate-1-semialdehyde 2,1-aminomutase (426 aa).

K265 is modified (N6-(pyridoxal phosphate)lysine).

Belongs to the class-III pyridoxal-phosphate-dependent aminotransferase family. HemL subfamily. In terms of assembly, homodimer. Pyridoxal 5'-phosphate is required as a cofactor.

The protein localises to the cytoplasm. It catalyses the reaction (S)-4-amino-5-oxopentanoate = 5-aminolevulinate. It participates in porphyrin-containing compound metabolism; protoporphyrin-IX biosynthesis; 5-aminolevulinate from L-glutamyl-tRNA(Glu): step 2/2. This Salmonella typhi protein is Glutamate-1-semialdehyde 2,1-aminomutase.